Reading from the N-terminus, the 384-residue chain is Intraflagellar transport protein 46 homolog (384 aa).

2 disordered regions span residues 52-151 (VNAE…PADY) and 358-384 (SATD…LTLD). Residues 87-99 (EKLEEDTKRKKEP) are compositionally biased toward basic and acidic residues. Over residues 110–138 (DEEEDEDDDDDDDDDDSDDTESDEEEEEP) the composition is skewed to acidic residues. The segment covering 358–374 (SATDGQKSDTPPASRSA) has biased composition (polar residues).

It belongs to the IFT46 family.

The protein resides in the cytoplasm. It localises to the cytoskeleton. The protein localises to the cilium basal body. It is found in the cell projection. Its subcellular location is the cilium. Functionally, forms part of a complex involved in intraflagellar transport (IFT), the bi-directional movement of particles required for the assembly, maintenance and functioning of primary cilia. Plays a role in early embryonic development. This Danio rerio (Zebrafish) protein is Intraflagellar transport protein 46 homolog.